The sequence spans 2692 residues: Thyroglobulin (2692 aa).

A signal peptide spans 1-19; that stretch reads MALALWVFALLGSACLVSA. Tyr24 bears the Iodotyrosine; alternate mark. Tyr24 is subject to Sulfotyrosine; alternate. Position 24 is a thyroxine; alternate (Tyr24). Residue Tyr24 is modified to Triiodothyronine; alternate. 3 consecutive Thyroglobulin type-1 domains span residues 31–92, 93–160, and 161–248; these read LRPC…PVAC, LSFC…PARC, and PGSC…LAGT. Disulfide bonds link Cys34–Cys52, Cys63–Cys70, Cys72–Cys92, Cys96–Cys120, Cys131–Cys138, Cys140–Cys160, Cys164–Cys183, and Cys194–Cys235. Tyr108 carries the iodotyrosine modification. Asn110 carries an N-linked (GlcNAc...) asparagine glycan. Tyr149 is modified (iodotyrosine; alternate). At Tyr149 the chain carries Diiodotyrosine; alternate. N-linked (GlcNAc...) asparagine glycosylation occurs at Asn198. 2 positions are modified to iodotyrosine: Tyr234 and Tyr258. In terms of domain architecture, Thyroglobulin type-1 4 spans 298–358; the sequence is PTKCEVERFA…TRRPSEPLSC (61 aa). 9 disulfide bridges follow: Cys301–Cys319, Cys330–Cys336, Cys338–Cys358, Cys364–Cys621, Cys408–Cys609, Cys632–Cys637, Cys639–Cys659, Cys663–Cys688, and Cys699–Cys704. 3 N-linked (GlcNAc...) asparagine glycosylation sites follow: Asn485, Asn497, and Asn546. Thyroglobulin type-1 domains are found at residues 606–659, 660–727, and 728–923; these read SQGC…RPRC, PTAC…PKQC, and PTPC…VPAC. At Tyr705 the chain carries Iodotyrosine; alternate. Tyr705 carries the thyroxine; alternate modification. A Triiodothyronine; alternate modification is found at Tyr705. The residue at position 705 (Tyr705) is a Diiodotyrosine; alternate. 13 cysteine pairs are disulfide-bonded: Cys706–Cys727, Cys731–Cys764, Cys775–Cys900, Cys902–Cys923, Cys927–Cys1033, Cys1044–Cys1051, Cys1053–Cys1079, Cys1128–Cys1147, Cys1151–Cys1171, Cys1183–Cys1190, Cys1192–Cys1212, Cys1237–Cys1287, and Cys1262–Cys1278. An N-linked (GlcNAc...) asparagine glycan is attached at Asn749. Iodotyrosine is present on Tyr786. The N-linked (GlcNAc...) asparagine glycan is linked to Asn855. Tyr868 is subject to Iodotyrosine; alternate. Tyr868 is subject to Diiodotyrosine; alternate. The residue at position 885 (Tyr885) is a Diiodotyrosine. The N-linked (GlcNAc...) asparagine glycan is linked to Asn949. Residue Tyr994 is modified to Iodotyrosine; alternate. Tyr994 carries the post-translational modification Diiodotyrosine; alternate. Thyroglobulin type-1 domains lie at 1021 to 1079, 1088 to 1147, and 1148 to 1212; these read SGPL…PTPC, LSAW…SAPC, and PGLC…QPAC. An N-linked (GlcNAc...) asparagine glycan is attached at Asn1142. Tyr1241 carries the iodotyrosine modification. Tyr1241 is subject to Thyroxine. N-linked (GlcNAc...) asparagine glycans are attached at residues Asn1296 and Asn1384. 13 cysteine pairs are disulfide-bonded: Cys1372–Cys1392, Cys1395–Cys1406, Cys1409–Cys1423, Cys1426–Cys1443, Cys1447–Cys1456, Cys1476–Cys1498, Cys1535–Cys1559, Cys1539–Cys1545, Cys1571–Cys1594, Cys1656–Cys1681, Cys1660–Cys1666, Cys1665–Cys1766, and Cys1692–Cys1709. 3 Type II repeats span residues 1389–1402, 1403–1419, and 1420–1436; these read PLGCVRCPEGSYFQ, EEQCIPCPAGFYQEQTG, and SLACAPCPAGTTTTSVG. Tyr1400 bears the Iodotyrosine; alternate mark. Tyr1400 bears the Diiodotyrosine; alternate mark. The 55-residue stretch at 1444–1498 folds into the Thyroglobulin type-1 11 domain; it reads VTACQRDEAGLQCDQDGQYRASQRDRASGKAFCVDSEGRRLPWSETQAPLVDAQC. A Type IIIA repeat occupies 1535-1655; sequence CLADCARDEA…GASLTEAHLF (121 aa). A Type IIIB repeat occupies 1656–1823; that stretch reads CLLACDRDSC…LFSLQQAHLW (168 aa). N-linked (GlcNAc...) asparagine glycosylation is present at Asn1800. 10 cysteine pairs are disulfide-bonded: Cys1824–Cys1850, Cys1828–Cys1835, Cys1859–Cys1870, Cys1927–Cys1955, Cys1931–Cys1937, Cys1936–Cys2007, Cys1966–Cys1979, Cys2061–Cys2085, Cys2065–Cys2071, and Cys2094–Cys2103. Residues 1824 to 1926 form a Type IIIA repeat; sequence CLSRCVQEPS…DKAISSGFFE (103 aa). One copy of the Type IIIB repeat lies at 1927-2060; that stretch reads CERLCDVDPC…VGDFSAARER (134 aa). Asn1944 carries N-linked (GlcNAc...) asparagine glycosylation. The Type IIIA repeat unit spans residues 2061–2118; it reads CLLECSRHQACLVTTLQTRPGAVRCMFYADTQSCTHSLQAQNCQLLLREEATHIYRKP. At Tyr2115 the chain carries Iodotyrosine. The interval 2119 to 2692 is cholinesterase-like (ChEL); sequence DIPLPGLGSS…PELASKSYSK (574 aa). N-linked (GlcNAc...) asparagine glycosylation is found at Asn2181 and Asn2226. At Tyr2467 the chain carries Thyroxine. Position 2500 is an iodotyrosine; alternate (Tyr2500). Tyr2500 is modified (thyroxine; alternate). Tyr2500 bears the Triiodothyronine; alternate mark. The residue at position 2500 (Tyr2500) is a Diiodotyrosine; alternate. An iodotyrosine mark is found at Tyr2514 and Tyr2544. Cys2518 and Cys2642 are oxidised to a cystine. Position 2624 is a diiodotyrosine (Tyr2624). Acidic residues predominate over residues 2658–2671; that stretch reads EAEDGPLAESEEED. The disordered stretch occupies residues 2658 to 2692; that stretch reads EAEDGPLAESEEEDRPGLTEDLLGLPELASKSYSK. Tyr2690 is subject to Iodotyrosine; alternate. The residue at position 2690 (Tyr2690) is a Thyroxine; alternate. Residue Tyr2690 is modified to Triiodothyronine; alternate. Diiodotyrosine; alternate is present on Tyr2690.

Belongs to the type-B carboxylesterase/lipase family. Monomer. Homodimer (via ChEL region); occurs in the endoplasmic reticulum and is required for export to the Golgi apparatus. Homooligomer; disulfide-linked; stored in this form in the thyroid follicle lumen. In terms of processing, iodinated on tyrosine residues by TPO. There are 4 pairs of iodinated tyrosines used for coupling: acceptor Tyr-24 is coupled to donor Tyr-149 or Tyr-234, acceptor Tyr-2500 is coupled to donor Tyr-2467, acceptor Tyr-2690 in monomer 1 is coupled to donor Tyr-2690 in monomer 2 and acceptor Tyr-1241 in monomer 1 is coupled to donor Tyr-108 in monomer 2. Post-translationally, sulfated tyrosines are desulfated during iodination. Undergoes sequential proteolysis by cathepsins to release thyroxine (T4) and triiodothyronine (T3) hormones. In the thyroid follicle lumen, cross-linked TG (storage form) is solubilized by limited proteolysis mediated by cathepsins CTSB and/or CTSL. Partially cleaved TG is further processed by CTSK/cathepsin K and/or CTSL resulting in the release of T4. Following endocytosis, further processing occurs leading to the release of T3 and more T4 hormones. In terms of tissue distribution, expressed in thyroid epithelial cells.

It localises to the secreted. Acts as a substrate for the production of iodinated thyroid hormones thyroxine (T4) and triiodothyronine (T3). The synthesis of T3 and T4 involves iodination of selected tyrosine residues of TG/thyroglobulin followed by their oxidative coupling. Following TG re-internalization and lysosomal-mediated proteolysis, T3 and T4 are released from the polypeptide backbone leading to their secretion into the bloodstream. One dimer produces 7 thyroid hormone molecules. In Sus scrofa (Pig), this protein is Thyroglobulin.